Reading from the N-terminus, the 443-residue chain is Ribosomal protein uS12 methylthiotransferase RimO (443 aa).

The 111-residue stretch at 8–118 (PKVGFVSLGC…VVNAVHEVVP (111 aa)) folds into the MTTase N-terminal domain. The [4Fe-4S] cluster site is built by C17, C53, C82, C151, C155, and C158. In terms of domain architecture, Radical SAM core spans 137-375 (LTPRHYAYLK…MAHQQAISAA (239 aa)). Residues 378–443 (QQRIGKEIEV…DEYDMWAEPI (66 aa)) form the TRAM domain.

It belongs to the methylthiotransferase family. RimO subfamily. Requires [4Fe-4S] cluster as cofactor.

It is found in the cytoplasm. It carries out the reaction L-aspartate(89)-[ribosomal protein uS12]-hydrogen + (sulfur carrier)-SH + AH2 + 2 S-adenosyl-L-methionine = 3-methylsulfanyl-L-aspartate(89)-[ribosomal protein uS12]-hydrogen + (sulfur carrier)-H + 5'-deoxyadenosine + L-methionine + A + S-adenosyl-L-homocysteine + 2 H(+). Functionally, catalyzes the methylthiolation of an aspartic acid residue of ribosomal protein uS12. The chain is Ribosomal protein uS12 methylthiotransferase RimO from Pseudomonas entomophila (strain L48).